We begin with the raw amino-acid sequence, 465 residues long: ATP synthase subunit beta (465 aa).

Position 152–159 (glycine 152–threonine 159) interacts with ATP.

It belongs to the ATPase alpha/beta chains family. As to quaternary structure, F-type ATPases have 2 components, CF(1) - the catalytic core - and CF(0) - the membrane proton channel. CF(1) has five subunits: alpha(3), beta(3), gamma(1), delta(1), epsilon(1). CF(0) has three main subunits: a(1), b(2) and c(9-12). The alpha and beta chains form an alternating ring which encloses part of the gamma chain. CF(1) is attached to CF(0) by a central stalk formed by the gamma and epsilon chains, while a peripheral stalk is formed by the delta and b chains.

It localises to the cell membrane. The catalysed reaction is ATP + H2O + 4 H(+)(in) = ADP + phosphate + 5 H(+)(out). In terms of biological role, produces ATP from ADP in the presence of a proton gradient across the membrane. The catalytic sites are hosted primarily by the beta subunits. The protein is ATP synthase subunit beta of Ruminiclostridium cellulolyticum (strain ATCC 35319 / DSM 5812 / JCM 6584 / H10) (Clostridium cellulolyticum).